The following is a 791-amino-acid chain: Subtilisin-like protease SBT5.6 (791 aa).

The N-terminal stretch at 1–20 (MKKLTSLFPLLFLIPLLASC) is a signal peptide. Residues 21–108 (AEEKQVYIVY…KSHPRKYEAH (88 aa)) constitute a propeptide, activation peptide. The Inhibitor I9 domain maps to 26–104 (VYIVYFGEHK…VSVFKSHPRK (79 aa)). The Peptidase S8 domain maps to 134 to 645 (ADDRFRVGRN…SGHFRPTKAA (512 aa)). The active-site Charge relay system is the Asp160. N-linked (GlcNAc...) asparagine glycans are attached at residues Asn193 and Asn219. His235 (charge relay system) is an active-site residue. The 95-residue stretch at 400–494 (FAPLVYASNV…VTPTVVDKIL (95 aa)) folds into the PA domain. Asn417 carries an N-linked (GlcNAc...) asparagine glycan. The active-site Charge relay system is the Ser578. Residues Asn666, Asn713, and Asn761 are each glycosylated (N-linked (GlcNAc...) asparagine).

The protein belongs to the peptidase S8 family.

The protein localises to the secreted. In Arabidopsis thaliana (Mouse-ear cress), this protein is Subtilisin-like protease SBT5.6.